The following is a 569-amino-acid chain: Mitochondrial import receptor subunit tomm-70 (569 aa).

Residues 1–12 are Mitochondrial intermembrane-facing; sequence MVETTGISDQTK. The chain crosses the membrane as a helical span at residues 13 to 32; it reads KVLIGVAAAATVAGVGYLVY. Topologically, residues 33 to 569 are cytoplasmic; it reads KSFGGSDLER…KRAAEMLDMY (537 aa). TPR repeat units follow at residues 44-77, 119-152, 221-254, and 510-544; these read LEEI…AGPN, TKAY…DSSL, DQKQ…PPAM, and LHLL…APPR.

This sequence belongs to the Tom70 family. In terms of assembly, forms part of the preprotein translocase complex of the outer mitochondrial membrane (TOM complex). In terms of tissue distribution, expressed in body wall muscle cells, the pharynx and structures in the tail.

It is found in the mitochondrion outer membrane. Receptor that accelerates the import of all mitochondrial precursor proteins. The polypeptide is Mitochondrial import receptor subunit tomm-70 (Caenorhabditis elegans).